A 338-amino-acid polypeptide reads, in one-letter code: Lipoate-protein ligase A (338 aa).

One can recognise a BPL/LPL catalytic domain in the interval 29–216 (DPNQRVLFLW…AFFSHYGERV (188 aa)). ATP contacts are provided by residues R71, 76 to 79 (GAVF), and K134. A (R)-lipoate-binding site is contributed by K134.

The protein belongs to the LplA family. As to quaternary structure, monomer.

It is found in the cytoplasm. The enzyme catalyses L-lysyl-[lipoyl-carrier protein] + (R)-lipoate + ATP = N(6)-[(R)-lipoyl]-L-lysyl-[lipoyl-carrier protein] + AMP + diphosphate + H(+). It participates in protein modification; protein lipoylation via exogenous pathway; protein N(6)-(lipoyl)lysine from lipoate: step 1/2. The protein operates within protein modification; protein lipoylation via exogenous pathway; protein N(6)-(lipoyl)lysine from lipoate: step 2/2. Catalyzes both the ATP-dependent activation of exogenously supplied lipoate to lipoyl-AMP and the transfer of the activated lipoyl onto the lipoyl domains of lipoate-dependent enzymes. The chain is Lipoate-protein ligase A from Aeromonas hydrophila subsp. hydrophila (strain ATCC 7966 / DSM 30187 / BCRC 13018 / CCUG 14551 / JCM 1027 / KCTC 2358 / NCIMB 9240 / NCTC 8049).